The following is an 878-amino-acid chain: Aminopeptidase M1-A (878 aa).

The segment at 105–212 (VGEGTLVIAF…MSTYLVAVIV (108 aa)) is required for membrane association. Substrate contacts are provided by residues glutamate 145 and 278–282 (GAMEN). Histidine 314 provides a ligand contact to Zn(2+). Glutamate 315 functions as the Proton acceptor in the catalytic mechanism. The Zn(2+) site is built by histidine 318 and glutamate 337. The Dileucine internalization motif signature appears at 727 to 728 (LL).

This sequence belongs to the peptidase M1 family. Homodimer. Zn(2+) serves as cofactor.

The protein resides in the membrane. Its subcellular location is the microsome membrane. The protein localises to the cytoplasm. The enzyme catalyses Release of an N-terminal amino acid, Xaa-|-Yaa- from a peptide, amide or arylamide. Xaa is preferably Ala, but may be most amino acids including Pro (slow action). When a terminal hydrophobic residue is followed by a prolyl residue, the two may be released as an intact Xaa-Pro dipeptide.. The chain is Aminopeptidase M1-A from Oryza sativa subsp. japonica (Rice).